The sequence spans 272 residues: Diaminopimelate epimerase (272 aa).

Residues N11 and N60 each coordinate substrate. C69 serves as the catalytic Proton donor. Substrate contacts are provided by residues 70–71 (GN), N181, and 199–200 (ER). The active-site Proton acceptor is the C209. Residue 210 to 211 (GT) participates in substrate binding.

It belongs to the diaminopimelate epimerase family. In terms of assembly, homodimer.

It is found in the cytoplasm. The enzyme catalyses (2S,6S)-2,6-diaminopimelate = meso-2,6-diaminopimelate. It functions in the pathway amino-acid biosynthesis; L-lysine biosynthesis via DAP pathway; DL-2,6-diaminopimelate from LL-2,6-diaminopimelate: step 1/1. Its function is as follows. Catalyzes the stereoinversion of LL-2,6-diaminopimelate (L,L-DAP) to meso-diaminopimelate (meso-DAP), a precursor of L-lysine and an essential component of the bacterial peptidoglycan. This is Diaminopimelate epimerase from Helicobacter pylori (strain P12).